The chain runs to 866 residues: Protein SEY1 (866 aa).

The Cytoplasmic portion of the chain corresponds to M1–Q746. The 258-residue stretch at G48–A305 folds into the GB1/RHD3-type G domain. GTP is bound at residue G58–S65. Residues S480–R506 adopt a coiled-coil conformation. Residues I747–L767 form a helical membrane-spanning segment. At R768–P770 the chain is on the lumenal side. The chain crosses the membrane as a helical span at residues V771–L791. The Cytoplasmic portion of the chain corresponds to W792–W866. The interval S840 to W866 is disordered. Residues R854–W866 show a composition bias toward acidic residues.

The protein belongs to the TRAFAC class dynamin-like GTPase superfamily. GB1/RHD3 GTPase family. RHD3 subfamily.

Its subcellular location is the endoplasmic reticulum membrane. Functionally, cooperates with the reticulon proteins and tubule-shaping DP1 family proteins to generate and maintain the structure of the tubular endoplasmic reticulum network. Has GTPase activity, which is required for its function in ER organization. In Coccidioides immitis (strain RS) (Valley fever fungus), this protein is Protein SEY1.